A 249-amino-acid chain; its full sequence is Small ribosomal subunit protein eS6 (249 aa).

Residues 216 to 229 (RMKEAKEKRQEQIA) are compositionally biased toward basic and acidic residues. The disordered stretch occupies residues 216–249 (RMKEAKEKRQEQIAKRRRLSSLRASTSKSESSQK). A phosphoserine mark is found at S235, S236, S240, S244, and S247. Over residues 236–249 (SLRASTSKSESSQK) the composition is skewed to low complexity.

The protein belongs to the eukaryotic ribosomal protein eS6 family. In terms of assembly, component of the small ribosomal subunit. Part of the small subunit (SSU) processome, composed of more than 70 proteins and the RNA chaperone small nucleolar RNA (snoRNA) U3. Ribosomal protein S6 is the major substrate of protein kinases in eukaryote ribosomes. The phosphorylation is stimulated by growth factors, tumor promoting agents, and mitogens. It is dephosphorylated at growth arrest.

It localises to the cytoplasm. It is found in the nucleus. Its subcellular location is the nucleolus. Component of the 40S small ribosomal subunit. Plays an important role in controlling cell growth and proliferation through the selective translation of particular classes of mRNA. Part of the small subunit (SSU) processome, first precursor of the small eukaryotic ribosomal subunit. During the assembly of the SSU processome in the nucleolus, many ribosome biogenesis factors, an RNA chaperone and ribosomal proteins associate with the nascent pre-rRNA and work in concert to generate RNA folding, modifications, rearrangements and cleavage as well as targeted degradation of pre-ribosomal RNA by the RNA exosome. This Gallus gallus (Chicken) protein is Small ribosomal subunit protein eS6 (RPS6).